A 237-amino-acid polypeptide reads, in one-letter code: Uridylate kinase (237 aa).

An ATP-binding site is contributed by 11-14; that stretch reads KLSG. UMP is bound at residue glycine 53. ATP-binding residues include glycine 54 and arginine 58. UMP is bound by residues aspartate 73 and 134-141; that span reads TGNPFFTT. ATP contacts are provided by threonine 161, tyrosine 167, and aspartate 170.

The protein belongs to the UMP kinase family. As to quaternary structure, homohexamer.

The protein localises to the cytoplasm. It catalyses the reaction UMP + ATP = UDP + ADP. Its pathway is pyrimidine metabolism; CTP biosynthesis via de novo pathway; UDP from UMP (UMPK route): step 1/1. Its activity is regulated as follows. Inhibited by UTP. Catalyzes the reversible phosphorylation of UMP to UDP. The protein is Uridylate kinase of Nitrosomonas eutropha (strain DSM 101675 / C91 / Nm57).